The chain runs to 459 residues: Phosphomethylpyrimidine synthase (459 aa).

Substrate-binding positions include Asn80, Met109, Tyr139, His175, 195-197 (SRG), 236-239 (DSLR), and Glu275. His279 contributes to the Zn(2+) binding site. Residue Tyr302 coordinates substrate. His343 contributes to the Zn(2+) binding site. Residues Cys423, Cys426, and Cys431 each coordinate [4Fe-4S] cluster.

Belongs to the ThiC family. [4Fe-4S] cluster is required as a cofactor.

The enzyme catalyses 5-amino-1-(5-phospho-beta-D-ribosyl)imidazole + S-adenosyl-L-methionine = 4-amino-2-methyl-5-(phosphooxymethyl)pyrimidine + CO + 5'-deoxyadenosine + formate + L-methionine + 3 H(+). Its pathway is cofactor biosynthesis; thiamine diphosphate biosynthesis. Its function is as follows. Catalyzes the synthesis of the hydroxymethylpyrimidine phosphate (HMP-P) moiety of thiamine from aminoimidazole ribotide (AIR) in a radical S-adenosyl-L-methionine (SAM)-dependent reaction. In Gloeothece citriformis (strain PCC 7424) (Cyanothece sp. (strain PCC 7424)), this protein is Phosphomethylpyrimidine synthase.